A 309-amino-acid chain; its full sequence is Homoserine kinase (309 aa).

95-105 (PQSRGLGSSAA) contacts ATP.

Belongs to the GHMP kinase family. Homoserine kinase subfamily.

The protein resides in the cytoplasm. It catalyses the reaction L-homoserine + ATP = O-phospho-L-homoserine + ADP + H(+). The protein operates within amino-acid biosynthesis; L-threonine biosynthesis; L-threonine from L-aspartate: step 4/5. Functionally, catalyzes the ATP-dependent phosphorylation of L-homoserine to L-homoserine phosphate. This Corynebacterium glutamicum (strain R) protein is Homoserine kinase.